Consider the following 242-residue polypeptide: Glycerol-3-phosphate acyltransferase (242 aa).

Transmembrane regions (helical) follow at residues 7-27 (ISLL…IMFA), 61-81 (IAIG…ILLI), 102-122 (YYLT…PVYF), 135-155 (GFVF…WWTI), 162-182 (VSLA…IPWL), and 201-221 (DWYI…IIIW).

The protein belongs to the PlsY family. In terms of assembly, probably interacts with PlsX.

The protein localises to the cell membrane. The catalysed reaction is an acyl phosphate + sn-glycerol 3-phosphate = a 1-acyl-sn-glycero-3-phosphate + phosphate. The protein operates within lipid metabolism; phospholipid metabolism. Functionally, catalyzes the transfer of an acyl group from acyl-phosphate (acyl-PO(4)) to glycerol-3-phosphate (G3P) to form lysophosphatidic acid (LPA). This enzyme utilizes acyl-phosphate as fatty acyl donor, but not acyl-CoA or acyl-ACP. In Mycoplasmoides gallisepticum (strain R(low / passage 15 / clone 2)) (Mycoplasma gallisepticum), this protein is Glycerol-3-phosphate acyltransferase.